A 121-amino-acid chain; its full sequence is Small ribosomal subunit protein uS13 (121 aa).

The interval 93 to 121 (RGLPMRGQRTRTNARTRKGPRKGAAALKK) is disordered.

Belongs to the universal ribosomal protein uS13 family. Part of the 30S ribosomal subunit. Forms a loose heterodimer with protein S19. Forms two bridges to the 50S subunit in the 70S ribosome.

Functionally, located at the top of the head of the 30S subunit, it contacts several helices of the 16S rRNA. In the 70S ribosome it contacts the 23S rRNA (bridge B1a) and protein L5 of the 50S subunit (bridge B1b), connecting the 2 subunits; these bridges are implicated in subunit movement. Contacts the tRNAs in the A and P-sites. The polypeptide is Small ribosomal subunit protein uS13 (Acidovorax ebreus (strain TPSY) (Diaphorobacter sp. (strain TPSY))).